Here is a 292-residue protein sequence, read N- to C-terminus: UDP-N-acetylenolpyruvoylglucosamine reductase (292 aa).

The region spanning 27–188 (KIGGPVRLFI…LRVGFRIIKG (162 aa)) is the FAD-binding PCMH-type domain. Arg-166 is an active-site residue. Ser-217 functions as the Proton donor in the catalytic mechanism. Glu-288 is a catalytic residue.

The protein belongs to the MurB family. FAD is required as a cofactor.

The protein localises to the cytoplasm. The catalysed reaction is UDP-N-acetyl-alpha-D-muramate + NADP(+) = UDP-N-acetyl-3-O-(1-carboxyvinyl)-alpha-D-glucosamine + NADPH + H(+). Its pathway is cell wall biogenesis; peptidoglycan biosynthesis. Functionally, cell wall formation. The protein is UDP-N-acetylenolpyruvoylglucosamine reductase of Thermosipho melanesiensis (strain DSM 12029 / CIP 104789 / BI429).